Reading from the N-terminus, the 468-residue chain is Glutamate--tRNA ligase (468 aa).

The 'HIGH' region motif lies at 14–24; the sequence is PSPTGFIHLGN. A 'KMSKS' region motif is present at residues 246-250; that stretch reads KMSKR. ATP is bound at residue Lys249.

Belongs to the class-I aminoacyl-tRNA synthetase family. Glutamate--tRNA ligase type 1 subfamily. Monomer.

It is found in the cytoplasm. The enzyme catalyses tRNA(Glu) + L-glutamate + ATP = L-glutamyl-tRNA(Glu) + AMP + diphosphate. Functionally, catalyzes the attachment of glutamate to tRNA(Glu) in a two-step reaction: glutamate is first activated by ATP to form Glu-AMP and then transferred to the acceptor end of tRNA(Glu). The polypeptide is Glutamate--tRNA ligase (Leptothrix cholodnii (strain ATCC 51168 / LMG 8142 / SP-6) (Leptothrix discophora (strain SP-6))).